Consider the following 668-residue polypeptide: 1-deoxy-D-xylulose-5-phosphate synthase (668 aa).

Residues histidine 105 and 146–148 each bind thiamine diphosphate; that span reads AHS. Position 177 (aspartate 177) interacts with Mg(2+). Thiamine diphosphate-binding positions include 178–179, asparagine 206, tyrosine 316, and glutamate 398; that span reads GA. Asparagine 206 contributes to the Mg(2+) binding site.

This sequence belongs to the transketolase family. DXPS subfamily. In terms of assembly, homodimer. Requires Mg(2+) as cofactor. Thiamine diphosphate is required as a cofactor.

It carries out the reaction D-glyceraldehyde 3-phosphate + pyruvate + H(+) = 1-deoxy-D-xylulose 5-phosphate + CO2. The protein operates within metabolic intermediate biosynthesis; 1-deoxy-D-xylulose 5-phosphate biosynthesis; 1-deoxy-D-xylulose 5-phosphate from D-glyceraldehyde 3-phosphate and pyruvate: step 1/1. In terms of biological role, catalyzes the acyloin condensation reaction between C atoms 2 and 3 of pyruvate and glyceraldehyde 3-phosphate to yield 1-deoxy-D-xylulose-5-phosphate (DXP). This is 1-deoxy-D-xylulose-5-phosphate synthase from Nitrobacter hamburgensis (strain DSM 10229 / NCIMB 13809 / X14).